Reading from the N-terminus, the 260-residue chain is Cytochrome c1-2, heme protein, mitochondrial (260 aa).

The transit peptide at 1-17 (IGAGVSGLLGFATVASA) directs the protein to the mitochondrion. Over 18 to 221 (DEAEHGLECP…AAEPEMEERK (204 aa)) the chain is Mitochondrial intermembrane. Positions 43-150 (ASIRRGHQVY…NGQNYVFALL (108 aa)) constitute a Cytochrome c domain. Cys56, Cys59, His60, and Met179 together coordinate heme c. Residues 222-241 (LMGFKWIFVLSLALLQAAYY) traverse the membrane as a helical segment. Residues 242–260 (RRLRWSVLKSRKLVLDVVN) lie on the Mitochondrial matrix side of the membrane.

Belongs to the cytochrome c family. In terms of assembly, component of the ubiquinol-cytochrome c oxidoreductase (cytochrome b-c1 complex, complex III, CIII), a multisubunit enzyme composed of 3 respiratory subunits cytochrome b, cytochrome c1 and Rieske protein, 2 core protein subunits, and additional low-molecular weight protein subunits. The complex exists as an obligatory dimer and forms supercomplexes (SCs) in the inner mitochondrial membrane with cytochrome c oxidase (complex IV, CIV). It depends on heme c as a cofactor. In all tissues analyzed.

It localises to the mitochondrion inner membrane. It carries out the reaction a quinol + 2 Fe(III)-[cytochrome c](out) = a quinone + 2 Fe(II)-[cytochrome c](out) + 2 H(+)(out). Component of the ubiquinol-cytochrome c oxidoreductase, a multisubunit transmembrane complex that is part of the mitochondrial electron transport chain which drives oxidative phosphorylation. The respiratory chain contains 3 multisubunit complexes succinate dehydrogenase (complex II, CII), ubiquinol-cytochrome c oxidoreductase (cytochrome b-c1 complex, complex III, CIII) and cytochrome c oxidase (complex IV, CIV), that cooperate to transfer electrons derived from NADH and succinate to molecular oxygen, creating an electrochemical gradient over the inner membrane that drives transmembrane transport and the ATP synthase. The cytochrome b-c1 complex catalyzes electron transfer from ubiquinol to cytochrome c, linking this redox reaction to translocation of protons across the mitochondrial inner membrane, with protons being carried across the membrane as hydrogens on the quinol. In the process called Q cycle, 2 protons are consumed from the matrix, 4 protons are released into the intermembrane space and 2 electrons are passed to cytochrome c. Cytochrome c1 is a catalytic core subunit containing a c-type heme. It transfers electrons from the [2Fe-2S] iron-sulfur cluster of the Rieske protein to cytochrome c. This chain is Cytochrome c1-2, heme protein, mitochondrial (CYCL), found in Solanum tuberosum (Potato).